The chain runs to 363 residues: Phosphoserine aminotransferase (363 aa).

An L-glutamate-binding site is contributed by Arg-42. Residues 76-77 (AS), Trp-101, Thr-151, Asp-170, and Gln-193 contribute to the pyridoxal 5'-phosphate site. Lys-194 is subject to N6-(pyridoxal phosphate)lysine. 234 to 235 (NT) contributes to the pyridoxal 5'-phosphate binding site.

Belongs to the class-V pyridoxal-phosphate-dependent aminotransferase family. SerC subfamily. In terms of assembly, homodimer. Pyridoxal 5'-phosphate is required as a cofactor.

It localises to the cytoplasm. It catalyses the reaction O-phospho-L-serine + 2-oxoglutarate = 3-phosphooxypyruvate + L-glutamate. The catalysed reaction is 4-(phosphooxy)-L-threonine + 2-oxoglutarate = (R)-3-hydroxy-2-oxo-4-phosphooxybutanoate + L-glutamate. The protein operates within amino-acid biosynthesis; L-serine biosynthesis; L-serine from 3-phospho-D-glycerate: step 2/3. In terms of biological role, catalyzes the reversible conversion of 3-phosphohydroxypyruvate to phosphoserine and of 3-hydroxy-2-oxo-4-phosphonooxybutanoate to phosphohydroxythreonine. The chain is Phosphoserine aminotransferase from Listeria monocytogenes serotype 4b (strain F2365).